The chain runs to 425 residues: Glutamate-1-semialdehyde 2,1-aminomutase (425 aa).

N6-(pyridoxal phosphate)lysine is present on Lys-265.

Belongs to the class-III pyridoxal-phosphate-dependent aminotransferase family. HemL subfamily. Homodimer. Pyridoxal 5'-phosphate is required as a cofactor.

Its subcellular location is the cytoplasm. It carries out the reaction (S)-4-amino-5-oxopentanoate = 5-aminolevulinate. The protein operates within porphyrin-containing compound metabolism; protoporphyrin-IX biosynthesis; 5-aminolevulinate from L-glutamyl-tRNA(Glu): step 2/2. This is Glutamate-1-semialdehyde 2,1-aminomutase from Desulfatibacillum aliphaticivorans.